We begin with the raw amino-acid sequence, 377 residues long: All-trans-retinol dehydrogenase [NAD(+)] ADH4 (377 aa).

Cysteine 47 is a Zn(2+) binding site. 48-49 (PT) contacts NAD(+). The Zn(2+) site is built by histidine 68, cysteine 98, cysteine 101, cysteine 104, cysteine 112, and cysteine 179. NAD(+)-binding positions include 204–209 (GLGCVG), aspartate 228, lysine 233, 297–299 (VGA), 320–322 (TFF), and arginine 372.

The protein belongs to the zinc-containing alcohol dehydrogenase family. Class-II subfamily. In terms of assembly, dimer. The cofactor is Zn(2+). In terms of tissue distribution, liver specific.

It is found in the cytoplasm. It catalyses the reaction all-trans-retinol + NAD(+) = all-trans-retinal + NADH + H(+). It carries out the reaction 9-cis-retinol + NAD(+) = 9-cis-retinal + NADH + H(+). The enzyme catalyses 20-oxo-(5Z,8Z,11Z,14Z)-eicosatetraenoate + NAD(+) + H2O = (5Z,8Z,11Z,14Z)-eicosatetraenedioate + NADH + 2 H(+). The catalysed reaction is 20-hydroxy-(5Z,8Z,11Z,14Z)-eicosatetraenoate + NAD(+) = 20-oxo-(5Z,8Z,11Z,14Z)-eicosatetraenoate + NADH + H(+). It catalyses the reaction 1,4-benzoquinone + NADH + H(+) = hydroquinone + NAD(+). With respect to regulation, oxidation of 20-HETE is inhibited by low concentrations of N-heptylformamide. Oxidation of 20-HETE is a decreased by 55-65% by either all-trans-retinol or all-trans-retinoic acid. Strongly inhibited by omega-hydroxy fatty acids. Functionally, catalyzes the NAD-dependent oxidation of either all-trans-retinol or 9-cis-retinol. Also oxidizes long chain omega-hydroxy fatty acids, such as 20-HETE, producing both the intermediate aldehyde, 20-oxoarachidonate and the end product, a dicarboxylic acid, (5Z,8Z,11Z,14Z)-eicosatetraenedioate. Also catalyzes the reduction of benzoquinones. The chain is All-trans-retinol dehydrogenase [NAD(+)] ADH4 from Rattus norvegicus (Rat).